Consider the following 1724-residue polypeptide: Protein mono-ADP-ribosyltransferase PARP4 (1724 aa).

Residues 1–94 (MVMGIFANCI…RLLDVKNYDP (94 aa)) enclose the BRCT domain. Residues 19 to 25 (PQQQKKK) carry the Nuclear localization signal motif. The disordered stretch occupies residues 97 to 123 (PLDITPPPDQKASSSEVKTEGLCPDSA). A phosphothreonine mark is found at Thr101 and Thr333. One can recognise a PARP alpha-helical domain in the interval 242 to 370 (SEQLQALLLE…ETNLSKPNPP (129 aa)). One can recognise a PARP catalytic domain in the interval 369 to 573 (PPSLAKYRAL…FSMPGDQIKD (205 aa)). A VIT domain is found at 607-735 (SSTKAGLQDA…KVLIKITYIT (129 aa)). A VWFA domain is found at 876–1046 (EVIICLDCSS…KQIEDQMTRL (171 aa)). Position 1236 is a phosphoserine (Ser1236). The Nuclear localization signal signature appears at 1237-1249 (KRKHRKIPFSKRK). A Phosphoserine modification is found at Ser1335. The segment at 1408 to 1452 (SAQSAPLQHPGGFTTRPSAGTFPELDSPQLHFSLPTDPDPIRGFG) is disordered. Residue Arg1476 is modified to Asymmetric dimethylarginine. Position 1504 is a phosphoserine (Ser1504). Residues 1562 to 1724 (VCIQHWQDAV…LHRVLHYSQG (163 aa)) are interaction with the major vault protein.

This sequence belongs to the ARTD/PARP family. In terms of assembly, component of the vault ribonucleoprotein particle, at least composed of MVP, PARP4 and one or more vault RNAs (vRNAs). Interacts with TEP1. In terms of tissue distribution, widely expressed; the highest levels are in the kidney; also detected in heart, placenta, lung, liver, skeletal muscle, spleen, leukocytes and pancreas.

The protein resides in the cytoplasm. It localises to the nucleus. Its subcellular location is the cytoskeleton. The protein localises to the spindle. It carries out the reaction L-aspartyl-[protein] + NAD(+) = 4-O-(ADP-D-ribosyl)-L-aspartyl-[protein] + nicotinamide. It catalyses the reaction L-glutamyl-[protein] + NAD(+) = 5-O-(ADP-D-ribosyl)-L-glutamyl-[protein] + nicotinamide. Mono-ADP-ribosyltransferase that mediates mono-ADP-ribosylation of target proteins. This chain is Protein mono-ADP-ribosyltransferase PARP4, found in Homo sapiens (Human).